The primary structure comprises 718 residues: Probable GTP diphosphokinase RSH2, chloroplastic (718 aa).

A chloroplast-targeting transit peptide spans 1 to 68 (MSVPAIAVYT…LFSSPTAAPR (68 aa)). The segment at 9–48 (YTSPPGAVYTSSSSSELEASSRGSAPCATAAPPSPASSHR) is disordered. Residues 19-39 (SSSSSELEASSRGSAPCATAA) show a composition bias toward low complexity. The HD domain occupies 243–347 (YLQHCVETAV…IKLADRLHNM (105 aa)).

Belongs to the RelA/SpoT family.

The protein localises to the plastid. It is found in the chloroplast. The enzyme catalyses GTP + ATP = guanosine 3'-diphosphate 5'-triphosphate + AMP. Its function is as follows. Probable ppGpp (guanosine 3'-diphosphate 5'-diphosphate) synthetase that may be involved in a rapid plant ppGpp-mediated response to pathogens and other stresses. The sequence is that of Probable GTP diphosphokinase RSH2, chloroplastic (RSH2) from Oryza sativa subsp. japonica (Rice).